A 418-amino-acid chain; its full sequence is Histidinol dehydrogenase (418 aa).

Tyr-119, Gln-180, and Asn-203 together coordinate NAD(+). Substrate is bound by residues Thr-226, Gln-248, and His-251. Positions 248 and 251 each coordinate Zn(2+). Residues Glu-316 and His-317 each act as proton acceptor in the active site. 4 residues coordinate substrate: His-317, Asp-350, Glu-404, and His-409. Asp-350 is a binding site for Zn(2+). Residue His-409 coordinates Zn(2+).

It belongs to the histidinol dehydrogenase family. It depends on Zn(2+) as a cofactor.

It carries out the reaction L-histidinol + 2 NAD(+) + H2O = L-histidine + 2 NADH + 3 H(+). It functions in the pathway amino-acid biosynthesis; L-histidine biosynthesis; L-histidine from 5-phospho-alpha-D-ribose 1-diphosphate: step 9/9. In terms of biological role, catalyzes the sequential NAD-dependent oxidations of L-histidinol to L-histidinaldehyde and then to L-histidine. This is Histidinol dehydrogenase from Staphylococcus aureus (strain MSSA476).